Reading from the N-terminus, the 406-residue chain is Kelch domain-containing protein 1 (406 aa).

Kelch repeat units follow at residues 24 to 76 (FLYV…CGAC), 80 to 134 (KLYI…VYKD), 135 to 181 (RLIY…TKTQ), 208 to 258 (KGYI…PIAD), 260 to 307 (KLFL…ACLG), and 311 to 361 (EIMV…LESQ).

Component of a CRL5 E3 ubiquitin-protein ligase complex, also named ECS (Elongin BC-CUL2/5-SOCS-box protein) complex, composed of CUL5, Elongin BC (ELOB and ELOC), RBX1 and substrate-specific adapter KLHDC1. In terms of tissue distribution, widely expressed, with high levels in skeletal muscle, pancreas and liver. Undetectable in peripheral blood leukocytes.

Its subcellular location is the cytoplasm. It is found in the cytosol. The protein operates within protein modification; protein ubiquitination. Substrate-recognition component of a Cul5-RING (CRL5) E3 ubiquitin-protein ligase complex of the DesCEND (destruction via C-end degrons) pathway, which recognizes a C-degron located at the extreme C terminus of target proteins, leading to their ubiquitination and degradation. The C-degron recognized by the DesCEND pathway is usually a motif of less than ten residues and can be present in full-length proteins, truncated proteins or proteolytically cleaved forms. The CRL5(KLHDC1) complex mediates ubiquitination and degradation of truncated SELENOS selenoprotein produced by failed UGA/Sec decoding, which ends with a glycine. In Homo sapiens (Human), this protein is Kelch domain-containing protein 1.